A 262-amino-acid polypeptide reads, in one-letter code: Ribosomal RNA small subunit methyltransferase A (262 aa).

Residues asparagine 14, leucine 16, glycine 41, glutamate 62, aspartate 87, and asparagine 109 each coordinate S-adenosyl-L-methionine.

Belongs to the class I-like SAM-binding methyltransferase superfamily. rRNA adenine N(6)-methyltransferase family. RsmA subfamily.

Its subcellular location is the cytoplasm. The catalysed reaction is adenosine(1518)/adenosine(1519) in 16S rRNA + 4 S-adenosyl-L-methionine = N(6)-dimethyladenosine(1518)/N(6)-dimethyladenosine(1519) in 16S rRNA + 4 S-adenosyl-L-homocysteine + 4 H(+). Specifically dimethylates two adjacent adenosines (A1518 and A1519) in the loop of a conserved hairpin near the 3'-end of 16S rRNA in the 30S particle. May play a critical role in biogenesis of 30S subunits. This chain is Ribosomal RNA small subunit methyltransferase A, found in Francisella tularensis subsp. tularensis (strain FSC 198).